Here is a 426-residue protein sequence, read N- to C-terminus: Enolase 1 (426 aa).

Position 163 (glutamine 163) interacts with (2R)-2-phosphoglycerate. Glutamate 205 functions as the Proton donor in the catalytic mechanism. Mg(2+) is bound by residues aspartate 242, glutamate 283, and aspartate 310. (2R)-2-phosphoglycerate-binding residues include lysine 335, arginine 364, serine 365, and lysine 386. Residue lysine 335 is the Proton acceptor of the active site.

It belongs to the enolase family. Mg(2+) is required as a cofactor.

It is found in the cytoplasm. It localises to the secreted. The protein localises to the cell surface. It carries out the reaction (2R)-2-phosphoglycerate = phosphoenolpyruvate + H2O. It functions in the pathway carbohydrate degradation; glycolysis; pyruvate from D-glyceraldehyde 3-phosphate: step 4/5. Functionally, catalyzes the reversible conversion of 2-phosphoglycerate (2-PG) into phosphoenolpyruvate (PEP). It is essential for the degradation of carbohydrates via glycolysis. This is Enolase 1 from Streptomyces coelicolor (strain ATCC BAA-471 / A3(2) / M145).